A 199-amino-acid chain; its full sequence is Large ribosomal subunit protein bL25 (199 aa).

It belongs to the bacterial ribosomal protein bL25 family. CTC subfamily. As to quaternary structure, part of the 50S ribosomal subunit; part of the 5S rRNA/L5/L18/L25 subcomplex. Contacts the 5S rRNA. Binds to the 5S rRNA independently of L5 and L18.

This is one of the proteins that binds to the 5S RNA in the ribosome where it forms part of the central protuberance. The polypeptide is Large ribosomal subunit protein bL25 (Syntrophobacter fumaroxidans (strain DSM 10017 / MPOB)).